We begin with the raw amino-acid sequence, 248 residues long: 3-deoxy-manno-octulosonate cytidylyltransferase (248 aa).

Belongs to the KdsB family.

The protein resides in the cytoplasm. It carries out the reaction 3-deoxy-alpha-D-manno-oct-2-ulosonate + CTP = CMP-3-deoxy-beta-D-manno-octulosonate + diphosphate. The protein operates within nucleotide-sugar biosynthesis; CMP-3-deoxy-D-manno-octulosonate biosynthesis; CMP-3-deoxy-D-manno-octulosonate from 3-deoxy-D-manno-octulosonate and CTP: step 1/1. It participates in bacterial outer membrane biogenesis; lipopolysaccharide biosynthesis. Functionally, activates KDO (a required 8-carbon sugar) for incorporation into bacterial lipopolysaccharide in Gram-negative bacteria. The chain is 3-deoxy-manno-octulosonate cytidylyltransferase from Erwinia tasmaniensis (strain DSM 17950 / CFBP 7177 / CIP 109463 / NCPPB 4357 / Et1/99).